Reading from the N-terminus, the 94-residue chain is Progonadoliberin-3 (94 aa).

Residues 1–23 (MEWKGRVLVQLLMLVCVLEVSLC) form the signal peptide. Position 24 is a pyrrolidone carboxylic acid (glutamine 24). A Glycine amide modification is found at glycine 33.

This sequence belongs to the GnRH family.

Its subcellular location is the secreted. Its function is as follows. Stimulates the secretion of gonadotropins. In Rutilus rutilus (Roach), this protein is Progonadoliberin-3 (gnrh3).